Consider the following 192-residue polypeptide: Secreted phosphoprotein 24 (192 aa).

An N-terminal signal peptide occupies residues 1-29 (MGKTPEDFERHTMRSLIFVLALSVFTCSG). 2 disulfides stabilise this stretch: Cys-92–Cys-103 and Cys-116–Cys-134. The disordered stretch occupies residues 155-192 (TDPRKRGSSRSEAFSSRGRGHSNGDWRKPDYTSPGKVE).

This sequence belongs to the SPP2 family. Multiply phosphorylated at serine residues.

It localises to the secreted. Could coordinate an aspect of bone turnover. This is Secreted phosphoprotein 24 (SPP2) from Gallus gallus (Chicken).